Consider the following 447-residue polypeptide: Rab GDP dissociation inhibitor alpha (447 aa).

Belongs to the Rab GDI family. Interacts with RHOH. Interacts with the non-phosphorylated forms of RAB1A, RAB3A, RAB5A, RAB5B, RAB5C, RAB8A, RAB8B, RAB10, RAB12, RAB35, and RAB43.

The protein resides in the cytoplasm. Its subcellular location is the golgi apparatus. It localises to the trans-Golgi network. Its function is as follows. Regulates the GDP/GTP exchange reaction of most Rab proteins by inhibiting the dissociation of GDP from them, and the subsequent binding of GTP to them. Promotes the dissociation of GDP-bound Rab proteins from the membrane and inhibits their activation. Promotes the dissociation of RAB1A, RAB3A, RAB5A and RAB10 from membranes. In Pongo pygmaeus (Bornean orangutan), this protein is Rab GDP dissociation inhibitor alpha (GDI1).